The following is a 511-amino-acid chain: Histidine ammonia-lyase (511 aa).

A cross-link (5-imidazolinone (Ala-Gly)) is located at residues 142–144 (ASG). Ser143 carries the post-translational modification 2,3-didehydroalanine (Ser).

The protein belongs to the PAL/histidase family. In terms of processing, contains an active site 4-methylidene-imidazol-5-one (MIO), which is formed autocatalytically by cyclization and dehydration of residues Ala-Ser-Gly.

The protein localises to the cytoplasm. It catalyses the reaction L-histidine = trans-urocanate + NH4(+). It functions in the pathway amino-acid degradation; L-histidine degradation into L-glutamate; N-formimidoyl-L-glutamate from L-histidine: step 1/3. This Rhizobium rhizogenes (strain K84 / ATCC BAA-868) (Agrobacterium radiobacter) protein is Histidine ammonia-lyase.